The primary structure comprises 229 residues: ATP-dependent dethiobiotin synthetase BioD (229 aa).

12-17 (GAGKTI) contributes to the ATP binding site. Residue Thr-16 coordinates Mg(2+). Lys-38 is an active-site residue. ATP is bound by residues Asp-46, 105-108 (EGVG), and 165-166 (SE). Asp-46 and Glu-105 together coordinate Mg(2+).

Belongs to the dethiobiotin synthetase family. As to quaternary structure, homodimer. It depends on Mg(2+) as a cofactor.

The protein localises to the cytoplasm. The enzyme catalyses (7R,8S)-7,8-diammoniononanoate + CO2 + ATP = (4R,5S)-dethiobiotin + ADP + phosphate + 3 H(+). It carries out the reaction (7R,8S)-8-amino-7-(carboxyamino)nonanoate + ATP = (4R,5S)-dethiobiotin + ADP + phosphate + H(+). It participates in cofactor biosynthesis; biotin biosynthesis; biotin from 7,8-diaminononanoate: step 1/2. Functionally, catalyzes a mechanistically unusual reaction, the ATP-dependent insertion of CO2 between the N7 and N8 nitrogen atoms of 7,8-diaminopelargonic acid (DAPA, also called 7,8-diammoniononanoate) to form a ureido ring. This cyanobacterium does not encode bioA (which catalyzes the formation of the precursor for this reaction in the cannonical pathway), instead it encodes bioU, which replaces bioA and also performs the first half of the cannonical BioD reaction. Thus in this organism BioD has a different substrate. This chain is ATP-dependent dethiobiotin synthetase BioD, found in Gloeobacter violaceus (strain ATCC 29082 / PCC 7421).